A 337-amino-acid chain; its full sequence is 3-isopropylmalate dehydrogenase (337 aa).

4 residues coordinate substrate: Arg-86, Arg-96, Arg-117, and Asp-201. Positions 201, 225, and 229 each coordinate Mg(2+). 258-270 (GAAFDIAGKNIGN) contacts NAD(+).

This sequence belongs to the isocitrate and isopropylmalate dehydrogenases family. As to quaternary structure, homotetramer. Mg(2+) is required as a cofactor. It depends on Mn(2+) as a cofactor.

The protein resides in the cytoplasm. It catalyses the reaction (2R,3S)-3-isopropylmalate + NAD(+) = 4-methyl-2-oxopentanoate + CO2 + NADH. The protein operates within amino-acid biosynthesis; L-leucine biosynthesis; L-leucine from 3-methyl-2-oxobutanoate: step 3/4. In terms of biological role, catalyzes the oxidation of 3-carboxy-2-hydroxy-4-methylpentanoate (3-isopropylmalate) to 3-carboxy-4-methyl-2-oxopentanoate. The product decarboxylates to 4-methyl-2 oxopentanoate. In Sulfurisphaera tokodaii (strain DSM 16993 / JCM 10545 / NBRC 100140 / 7) (Sulfolobus tokodaii), this protein is 3-isopropylmalate dehydrogenase (leuB).